We begin with the raw amino-acid sequence, 492 residues long: Glutamyl-tRNA(Gln) amidotransferase subunit A (492 aa).

Residues Lys78 and Ser158 each act as charge relay system in the active site. Ser182 functions as the Acyl-ester intermediate in the catalytic mechanism.

This sequence belongs to the amidase family. GatA subfamily. As to quaternary structure, heterotrimer of A, B and C subunits.

It carries out the reaction L-glutamyl-tRNA(Gln) + L-glutamine + ATP + H2O = L-glutaminyl-tRNA(Gln) + L-glutamate + ADP + phosphate + H(+). Allows the formation of correctly charged Gln-tRNA(Gln) through the transamidation of misacylated Glu-tRNA(Gln) in organisms which lack glutaminyl-tRNA synthetase. The reaction takes place in the presence of glutamine and ATP through an activated gamma-phospho-Glu-tRNA(Gln). This is Glutamyl-tRNA(Gln) amidotransferase subunit A from Rhodopseudomonas palustris (strain BisB5).